The sequence spans 619 residues: Adagio protein 3 (619 aa).

Positions 44–123 (VGMFYYPMTP…SEIRRCLEEG (80 aa)) constitute a PAS domain. At cysteine 91 the chain carries S-4a-FMN cysteine. The 42-residue stretch at 127–168 (QGELLNFRKDGTPLVNRLRLAPIRDDDGTITHVIGIQVFSET) folds into the PAC domain. The 47-residue stretch at 211–257 (ILQLSDEVLAHNILSRLTPRDVASIGSACRRLRQLTKNESVRKMVCQ) folds into the F-box domain. 5 Kelch repeats span residues 304-354 (SRCN…TSSP), 357-404 (RWGH…AGGT), 409-457 (RSWH…PTSW), 462-513 (RLGH…ECSA), and 523-571 (RLDH…NVPG).

The protein belongs to the ADAGIO family. Interacts with ADO1 (via Kelch repeats), ADO2 (via Kelch repeats), SKP1A/ASK1, SKP1B/ASK2, ASK3, SKP1K/ASK11, ASK12, ASK13 and SKP1N/ASK14. Interacts (via Kelch repeats) with CDF1, CDF2 and CDF3. Interacts (via N-terminus) with CO and GI (via N-terminus) in a blue-light-dependent manner. In terms of processing, FMN binds covalently to cysteine after exposure to blue light and is reversed in the dark. As to expression, highly expressed in stomata and leaves and to a lower extent in seeds, roots, rosettes, stems and siliques. Also present in sepals and anther filaments.

It localises to the nucleus. The protein localises to the cytoplasm. It functions in the pathway protein modification; protein ubiquitination. Its function is as follows. Component of an E3 ubiquitin ligase complex that plays a central role in blue light-dependent circadian cycles. Acts as a blue light photoreceptor, due to the presence of FMN, that mediates light-regulated protein degradation of critical clock components by targeting them to the proteasome complex. The SCF(ADO3) E3 ubiquitin ligase complex is involved in the regulation of circadian clock-dependent processes including transition to flowering time, hypocotyl elongation, cotyledons and leaf movement rhythms. Forms a complex with 'GIGANTEA' (GI) to regulate 'CONSTANS' (CO) expression. Promotes CO expression during the light period of long days by decreasing the stability of CDF1 and CDF2 and by interacting directly with the CO protein and stabilizing it. ADO3 function is mainly GI dependent. Does not act as a regulator of CDF1 transcription. The interactions of ADO1/ZTL and ADO2 with ADO3 prevent its interaction with CDF1. The chain is Adagio protein 3 (ADO3) from Arabidopsis thaliana (Mouse-ear cress).